The chain runs to 95 residues: Translation initiation factor 1A (95 aa).

Residues S6–E80 enclose the S1-like domain.

This sequence belongs to the eIF-1A family.

Seems to be required for maximal rate of protein biosynthesis. Enhances ribosome dissociation into subunits and stabilizes the binding of the initiator Met-tRNA(I) to 40 S ribosomal subunits. In Haloarcula marismortui (strain ATCC 43049 / DSM 3752 / JCM 8966 / VKM B-1809) (Halobacterium marismortui), this protein is Translation initiation factor 1A.